Here is a 304-residue protein sequence, read N- to C-terminus: MNKTLKIATRQSPLALWQAQNVKIRLEKHHPDLTVILVEMTTKGDQILNSPLSKIGGKGLFIKELEVSMMKGITDIAVHSMKDVPYEIPQGFKLGAILKRENPFDAFVSNDFSSIDDLPQNAKVGTCSIRRIVQLKAIRPDLKILDLRGNVNTRLKKLDKGGFDGIILACAGLIRLGFESRIKQQISDQQSLPAVGQGVVGIEIRENDTEILDLIKPLIDVETTYMVSAERAMNARLEGGCSVPIAGFALIDNEQIMLTGLVGNVDTGVILKEQILSHVSQAEALGVELANKLISLGAKDILKN.

Cys-241 carries the S-(dipyrrolylmethanemethyl)cysteine modification.

Belongs to the HMBS family. Monomer. It depends on dipyrromethane as a cofactor.

It catalyses the reaction 4 porphobilinogen + H2O = hydroxymethylbilane + 4 NH4(+). The protein operates within porphyrin-containing compound metabolism; protoporphyrin-IX biosynthesis; coproporphyrinogen-III from 5-aminolevulinate: step 2/4. In terms of biological role, tetrapolymerization of the monopyrrole PBG into the hydroxymethylbilane pre-uroporphyrinogen in several discrete steps. The polypeptide is Porphobilinogen deaminase (Ruthia magnifica subsp. Calyptogena magnifica).